Consider the following 266-residue polypeptide: Undecaprenyl-diphosphatase (266 aa).

8 helical membrane-spanning segments follow: residues 1–21, 39–59, 87–107, 111–131, 143–163, 186–206, 217–237, and 243–263; these read MTWLEIVVLALIQGLTEFLPI, QGLAFDVAVHVGTLLAVMVYF, WAVILGTIPACVAGLLLDSWI, LRSALVIALTTIGFGVLLGMA, FTLKDALIIGVSQALALIPGT, FSFLLSIPLIAAAGLFKGLEL, EIAGATLISAVSAYACIHLFL, and IGFMPFVIYRMLLGAGLLVWL.

It belongs to the UppP family.

The protein localises to the cell inner membrane. It catalyses the reaction di-trans,octa-cis-undecaprenyl diphosphate + H2O = di-trans,octa-cis-undecaprenyl phosphate + phosphate + H(+). Functionally, catalyzes the dephosphorylation of undecaprenyl diphosphate (UPP). Confers resistance to bacitracin. The chain is Undecaprenyl-diphosphatase from Hahella chejuensis (strain KCTC 2396).